We begin with the raw amino-acid sequence, 1149 residues long: Structural maintenance of chromosomes protein 6 homolog smc-6 (1149 aa).

Gly77–Ser84 contributes to the ATP binding site. Residues Leu309–Asp460 are a coiled coil. The flexible hinge stretch occupies residues Ile461–Leu687. The stretch at Tyr714–Asp920 forms a coiled coil. Disordered regions lie at residues Asn875–Glu900 and Glu1026–Leu1060. A compositionally biased stretch (acidic residues) spans Glu1026–Asp1038. Over residues Pro1042–Arg1058 the composition is skewed to basic residues.

This sequence belongs to the SMC family. SMC6 subfamily. Interacts with smc-5. As to expression, expressed in the germline (at protein level).

The protein resides in the nucleus. The protein localises to the chromosome. In terms of biological role, core component of the smc-5/smc-6 complex. Involved in DNA double-strand break repair by promoting sister-chromatid homologous recombination during meiosis. Also plays a role in the DNA damage repair of ultraviolet (UV) radiation-induced DNA lesions. Promotes efficient DNA replication. This is Structural maintenance of chromosomes protein 6 homolog smc-6 from Caenorhabditis elegans.